A 204-amino-acid polypeptide reads, in one-letter code: MNIFIVVLLCLTGVAIAEQCGRQAGGKLCPNNLCCSQWGWCGSTDEYCSPDHNCQSNCKDSGEGVGGGSASNVLATYHLYNSQDHGWDLNAASAYCSTWDANKPYSWRSKYGWTAFCGPVGAHGQSSCGKCLSVTNTGTGAKTTVRIVDQCSNGGLDLDVNVFRQLDTDGKGYERGHITVNYQFVDCGDSFNPLFSVMKSSVIN.

Positions 1-17 (MNIFIVVLLCLTGVAIA) are cleaved as a signal peptide. Positions 18–60 (EQCGRQAGGKLCPNNLCCSQWGWCGSTDEYCSPDHNCQSNCKD) constitute a Chitin-binding type-1 domain. 4 cysteine pairs are disulfide-bonded: Cys20/Cys35, Cys29/Cys41, Cys34/Cys48, and Cys54/Cys58. Residues 61-66 (SGEGVG) constitute a propeptide that is removed on maturation. Positions 68-189 (GSASNVLATY…VNYQFVDCGD (122 aa)) constitute a Barwin domain. 3 cysteine pairs are disulfide-bonded: Cys96–Cys128, Cys117–Cys151, and Cys131–Cys187.

In terms of processing, proteolytically processed to yield the two chains of the mature protein. Laticifer.

In terms of biological role, N-acetyl-D-glucosamine / N-acetyl-D-neuraminic acid binding lectin. Can inhibit fungal growth. The polypeptide is Pro-hevein (HEV1) (Hevea brasiliensis (Para rubber tree)).